A 253-amino-acid chain; its full sequence is Imidazole glycerol phosphate synthase subunit HisF (253 aa).

Catalysis depends on residues aspartate 11 and aspartate 130.

Belongs to the HisA/HisF family. Heterodimer of HisH and HisF.

The protein resides in the cytoplasm. It catalyses the reaction 5-[(5-phospho-1-deoxy-D-ribulos-1-ylimino)methylamino]-1-(5-phospho-beta-D-ribosyl)imidazole-4-carboxamide + L-glutamine = D-erythro-1-(imidazol-4-yl)glycerol 3-phosphate + 5-amino-1-(5-phospho-beta-D-ribosyl)imidazole-4-carboxamide + L-glutamate + H(+). It functions in the pathway amino-acid biosynthesis; L-histidine biosynthesis; L-histidine from 5-phospho-alpha-D-ribose 1-diphosphate: step 5/9. IGPS catalyzes the conversion of PRFAR and glutamine to IGP, AICAR and glutamate. The HisF subunit catalyzes the cyclization activity that produces IGP and AICAR from PRFAR using the ammonia provided by the HisH subunit. This chain is Imidazole glycerol phosphate synthase subunit HisF, found in Clostridium botulinum (strain Langeland / NCTC 10281 / Type F).